The primary structure comprises 112 residues: Large ribosomal subunit protein uL24 (112 aa).

A disordered region spans residues 92 to 112 (ERDGKQKTVRVRVSKSTGKDL).

The protein belongs to the universal ribosomal protein uL24 family. Part of the 50S ribosomal subunit.

Its function is as follows. One of two assembly initiator proteins, it binds directly to the 5'-end of the 23S rRNA, where it nucleates assembly of the 50S subunit. One of the proteins that surrounds the polypeptide exit tunnel on the outside of the subunit. The chain is Large ribosomal subunit protein uL24 from Kocuria rhizophila (strain ATCC 9341 / DSM 348 / NBRC 103217 / DC2201).